The following is a 213-amino-acid chain: Pyridoxine/pyridoxamine 5'-phosphate oxidase (213 aa).

Substrate is bound by residues 9–12 (RKSY) and K67. FMN-binding positions include 62 to 67 (RVVLIK), 77 to 78 (YT), R83, and K84. Y124, R128, and S132 together coordinate substrate. FMN contacts are provided by residues 141 to 142 (QS) and W185. Substrate is bound at residue 191–193 (RLH). R195 is a binding site for FMN.

This sequence belongs to the pyridoxamine 5'-phosphate oxidase family. As to quaternary structure, homodimer. FMN is required as a cofactor.

It carries out the reaction pyridoxamine 5'-phosphate + O2 + H2O = pyridoxal 5'-phosphate + H2O2 + NH4(+). The catalysed reaction is pyridoxine 5'-phosphate + O2 = pyridoxal 5'-phosphate + H2O2. It functions in the pathway cofactor metabolism; pyridoxal 5'-phosphate salvage; pyridoxal 5'-phosphate from pyridoxamine 5'-phosphate: step 1/1. It participates in cofactor metabolism; pyridoxal 5'-phosphate salvage; pyridoxal 5'-phosphate from pyridoxine 5'-phosphate: step 1/1. Functionally, catalyzes the oxidation of either pyridoxine 5'-phosphate (PNP) or pyridoxamine 5'-phosphate (PMP) into pyridoxal 5'-phosphate (PLP). This chain is Pyridoxine/pyridoxamine 5'-phosphate oxidase, found in Methylibium petroleiphilum (strain ATCC BAA-1232 / LMG 22953 / PM1).